The following is a 445-amino-acid chain: Phosphoglucosamine mutase 1 (445 aa).

Catalysis depends on serine 102, which acts as the Phosphoserine intermediate. Residues serine 102, aspartate 241, aspartate 243, and aspartate 245 each contribute to the Mg(2+) site. A Phosphoserine modification is found at serine 102.

It belongs to the phosphohexose mutase family. Requires Mg(2+) as cofactor. Activated by phosphorylation.

It catalyses the reaction alpha-D-glucosamine 1-phosphate = D-glucosamine 6-phosphate. Functionally, catalyzes the conversion of glucosamine-6-phosphate to glucosamine-1-phosphate. In Shewanella sp. (strain MR-7), this protein is Phosphoglucosamine mutase 1.